Here is a 98-residue protein sequence, read N- to C-terminus: NADH-ubiquinone oxidoreductase chain 4L (98 aa).

3 consecutive transmembrane segments (helical) span residues 1–21, 29–49, and 61–81; these read MTMVYANIFLAFITSLMGLLM, SLLCLEGMMLSLFVMMTVTIL, and IVLLVFAACEAALGLSLLVMV.

This sequence belongs to the complex I subunit 4L family. In terms of assembly, core subunit of respiratory chain NADH dehydrogenase (Complex I) which is composed of 45 different subunits.

Its subcellular location is the mitochondrion inner membrane. It carries out the reaction a ubiquinone + NADH + 5 H(+)(in) = a ubiquinol + NAD(+) + 4 H(+)(out). In terms of biological role, core subunit of the mitochondrial membrane respiratory chain NADH dehydrogenase (Complex I) which catalyzes electron transfer from NADH through the respiratory chain, using ubiquinone as an electron acceptor. Part of the enzyme membrane arm which is embedded in the lipid bilayer and involved in proton translocation. The protein is NADH-ubiquinone oxidoreductase chain 4L (MT-ND4L) of Monachus monachus (Mediterranean monk seal).